A 147-amino-acid polypeptide reads, in one-letter code: Hemoglobin subunit gamma-2 (147 aa).

Residues 3–147 (HFTEEDKATI…VASALSSRYH (145 aa)) enclose the Globin domain. Position 13 is a phosphothreonine (threonine 13). Phosphoserine occurs at positions 45, 51, and 53. N6-acetyllysine is present on lysine 60. Histidine 64 serves as a coordination point for heme b. Lysine 83 carries the post-translational modification N6-acetyllysine. Position 93 (histidine 93) interacts with heme b. The residue at position 94 (cysteine 94) is an S-nitrosocysteine. Residues serine 140, serine 143, and serine 144 each carry the phosphoserine modification.

It belongs to the globin family. Heterotetramer of two alpha chains and two gamma chains in fetal hemoglobin (Hb F). In terms of tissue distribution, red blood cells.

In terms of biological role, gamma chains make up the fetal hemoglobin F, in combination with alpha chains. In Hylobates lar (Lar gibbon), this protein is Hemoglobin subunit gamma-2 (HBG2).